Here is a 347-residue protein sequence, read N- to C-terminus: NADH-ubiquinone oxidoreductase chain 2 (347 aa).

11 helical membrane-spanning segments follow: residues P3–T23, H25–M45, Y59–T79, I96–P116, V122–L142, I149–G169, I178–P198, A201–V221, M237–L257, D274–M294, and L326–L346.

It belongs to the complex I subunit 2 family. As to quaternary structure, core subunit of respiratory chain NADH dehydrogenase (Complex I) which is composed of 45 different subunits. Interacts with TMEM242.

The protein localises to the mitochondrion inner membrane. The catalysed reaction is a ubiquinone + NADH + 5 H(+)(in) = a ubiquinol + NAD(+) + 4 H(+)(out). In terms of biological role, core subunit of the mitochondrial membrane respiratory chain NADH dehydrogenase (Complex I) which catalyzes electron transfer from NADH through the respiratory chain, using ubiquinone as an electron acceptor. Essential for the catalytic activity and assembly of complex I. This Nyctimene aello (Broad-striped tube-nosed fruit bat) protein is NADH-ubiquinone oxidoreductase chain 2.